The primary structure comprises 409 residues: N-acetylglucosamine-6-phosphate deacetylase (409 aa).

An a divalent metal cation-binding site is contributed by glutamate 143. A substrate-binding site is contributed by 154–155 (AH). A divalent metal cation contacts are provided by histidine 211 and histidine 232. Substrate is bound by residues 235–236 (NA), arginine 243, and 269–272 (DGTH). Catalysis depends on aspartate 294, which acts as the Proton donor/acceptor. Residue 328–330 (LSG) participates in substrate binding.

It belongs to the metallo-dependent hydrolases superfamily. NagA family. A divalent metal cation serves as cofactor.

The catalysed reaction is N-acetyl-D-glucosamine 6-phosphate + H2O = D-glucosamine 6-phosphate + acetate. It participates in amino-sugar metabolism; N-acetylneuraminate degradation. Functionally, hydrolyzes the N-glycolyl group from N-glycolylglucosamine 6-phosphate (GlcNGc-6-P) in the N-glycolylneuraminic acid (Neu5Gc) degradation pathway. Although human is not able to catalyze formation of Neu5Gc due to the inactive CMAHP enzyme, Neu5Gc is present in food and must be degraded. The chain is N-acetylglucosamine-6-phosphate deacetylase (AMDHD2) from Homo sapiens (Human).